The chain runs to 626 residues: Trehalase (626 aa).

The signal sequence occupies residues 1-35 (MASSCSIRCGSRNILVNAAATFLALLVVLRCFANA). Residues 36–595 (EKPSPCQSDV…STPQPVVVST (560 aa)) lie on the Extracellular side of the membrane. N104 carries an N-linked (GlcNAc...) asparagine glycan. Residues R181, 188–189 (WD), N225, and 234–236 (RSQ) contribute to the substrate site. The N-linked (GlcNAc...) asparagine glycan is linked to N274. Substrate contacts are provided by residues 299–301 (RPE) and G333. D335 functions as the Proton donor/acceptor in the catalytic mechanism. N-linked (GlcNAc...) asparagine glycosylation is found at N350, N384, N498, and N525. E532 functions as the Proton donor/acceptor in the catalytic mechanism. E547 contributes to the substrate binding site. The chain crosses the membrane as a helical span at residues 596–616 (AGQVMTGILALVISLAAGFIG). Over 617-626 (KMRCANNAAQ) the chain is Cytoplasmic.

This sequence belongs to the glycosyl hydrolase 37 family. In terms of assembly, monomer. Glycosylated; contains 3.1% carbohydrates.

The protein resides in the membrane. The enzyme catalyses alpha,alpha-trehalose + H2O = alpha-D-glucose + beta-D-glucose. Its activity is regulated as follows. Inhibited by sodium, potassium and ammonium ions, and by TEMED. This Apis mellifera (Honeybee) protein is Trehalase.